Consider the following 492-residue polypeptide: Probable malate:quinone oxidoreductase 1 (492 aa).

This sequence belongs to the MQO family. FAD serves as cofactor.

The catalysed reaction is (S)-malate + a quinone = a quinol + oxaloacetate. The protein operates within carbohydrate metabolism; tricarboxylic acid cycle; oxaloacetate from (S)-malate (quinone route): step 1/1. This chain is Probable malate:quinone oxidoreductase 1, found in Staphylococcus aureus (strain MW2).